The chain runs to 453 residues: Choline kinase alpha (453 aa).

A disordered region spans residues 22-81 (CGGNAAPTPGVGQQRDAAGELESKQLGGRTQPLALPPPPPPPLPLPPPPSPPLADEQPEP). Over residues 55–73 (ALPPPPPPPLPLPPPPSPP) the composition is skewed to pro residues. Ser-71 carries the phosphoserine modification. ATP is bound by residues 113-119 (RGGLSNM), Arg-142, and 203-209 (QFIPSRR). 115-117 (GLS) lines the phosphocholine pocket. Lys-243 is modified (N6-acetyllysine). Ser-275 carries the post-translational modification Phosphoserine. Positions 304 and 326 each coordinate ATP.

It belongs to the choline/ethanolamine kinase family. Homodimer. Heterodimer with CHKB. As to quaternary structure, monomer; acetylation by KAT5 promotes dissociation of the homodimer and monomerization. In terms of processing, phosphorylated at Ser-275 by AMPK in response to glucose deprivation, leading to localization to lipid droplets. Post-translationally, acetylated by KAT5 at Lys-243 following phosphorylation by AMPK, leading to monomerization and conversion into a tyrosine-protein kinase. In terms of tissue distribution, expressed ubiquitously with the highest level in testis.

Its subcellular location is the cytoplasm. The protein localises to the cytosol. It is found in the lipid droplet. It carries out the reaction choline + ATP = phosphocholine + ADP + H(+). The catalysed reaction is ethanolamine + ATP = phosphoethanolamine + ADP + H(+). It catalyses the reaction L-tyrosyl-[protein] + ATP = O-phospho-L-tyrosyl-[protein] + ADP + H(+). It functions in the pathway phospholipid metabolism; phosphatidylcholine biosynthesis; phosphocholine from choline: step 1/1. Its pathway is phospholipid metabolism; phosphatidylethanolamine biosynthesis; phosphatidylethanolamine from ethanolamine: step 1/3. Its function is as follows. Plays a key role in phospholipid biosynthesis by catalyzing the phosphorylation of free choline to phosphocholine, the first step in phosphatidylcholine biosynthesis. Also phosphorylates ethanolamine, thereby contributing to phosphatidylethanolamine biosynthesis. Has higher activity with choline. This isoform plays a key role in lipolysis of lipid droplets following glucose deprivation. In response to glucose deprivation, phosphorylated by AMPK, promoting localization to lipid droplets. Phosphorylation is followed by acetylation by KAT5, leading to dissociation of the homodimer into a monomer. Monomeric CHKA isoform 1 is converted into a tyrosine-protein kinase, which phosphorylates lipid droplet structural proteins PLIN2 and PLIN3, leading to lipolysis of lipid droplets. This chain is Choline kinase alpha (Chka), found in Mus musculus (Mouse).